A 359-amino-acid chain; its full sequence is 3-dehydroquinate synthase (359 aa).

NAD(+)-binding positions include 70-75, 105-109, 129-130, Lys-142, Lys-151, and 169-172; these read DGEQYK, GVIGD, TT, and FYKT. Zn(2+) contacts are provided by Glu-184, His-247, and His-264.

This sequence belongs to the sugar phosphate cyclases superfamily. Dehydroquinate synthase family. Co(2+) serves as cofactor. It depends on Zn(2+) as a cofactor. Requires NAD(+) as cofactor.

The protein resides in the cytoplasm. It catalyses the reaction 7-phospho-2-dehydro-3-deoxy-D-arabino-heptonate = 3-dehydroquinate + phosphate. Its pathway is metabolic intermediate biosynthesis; chorismate biosynthesis; chorismate from D-erythrose 4-phosphate and phosphoenolpyruvate: step 2/7. Catalyzes the conversion of 3-deoxy-D-arabino-heptulosonate 7-phosphate (DAHP) to dehydroquinate (DHQ). This chain is 3-dehydroquinate synthase, found in Francisella tularensis subsp. tularensis (strain WY96-3418).